The following is a 120-amino-acid chain: Ribosome-binding factor A (120 aa).

Belongs to the RbfA family. In terms of assembly, monomer. Binds 30S ribosomal subunits, but not 50S ribosomal subunits or 70S ribosomes.

Its subcellular location is the cytoplasm. Its function is as follows. One of several proteins that assist in the late maturation steps of the functional core of the 30S ribosomal subunit. Associates with free 30S ribosomal subunits (but not with 30S subunits that are part of 70S ribosomes or polysomes). Required for efficient processing of 16S rRNA. May interact with the 5'-terminal helix region of 16S rRNA. The sequence is that of Ribosome-binding factor A from Clostridium botulinum (strain Okra / Type B1).